We begin with the raw amino-acid sequence, 174 residues long: MSLPIYLIGARGCGKTTVGQALALALGYDFCDTDHYLQQARQQTVADIVAIEGWAGFRAREAESLKAVTAASKVIATGGGMVLAEENRLYMREHGRVIYLNANALVLAARLEAYPLADQRPTLTGRPVAEEMVEVLAARDALYQLAAHHIIDAMQTPDAVVNQIVSSLSLARAS.

Residue 12–17 coordinates ATP; sequence GCGKTT. Positions 16 and 32 each coordinate Mg(2+). Substrate contacts are provided by Asp34, Arg58, and Gly79. The interval 112-126 is LID domain; it reads EAYPLADQRPTLTGR. Arg120 serves as a coordination point for ATP. Position 139 (Arg139) interacts with substrate. Gln155 is an ATP binding site.

The protein belongs to the shikimate kinase family. AroL subfamily. As to quaternary structure, monomer. Mg(2+) serves as cofactor.

It localises to the cytoplasm. The enzyme catalyses shikimate + ATP = 3-phosphoshikimate + ADP + H(+). Its pathway is metabolic intermediate biosynthesis; chorismate biosynthesis; chorismate from D-erythrose 4-phosphate and phosphoenolpyruvate: step 5/7. Catalyzes the specific phosphorylation of the 3-hydroxyl group of shikimic acid using ATP as a cosubstrate. The chain is Shikimate kinase 2 from Erwinia tasmaniensis (strain DSM 17950 / CFBP 7177 / CIP 109463 / NCPPB 4357 / Et1/99).